The primary structure comprises 308 residues: Putative S-adenosyl-L-methionine-dependent methyltransferase MAB_4584c (308 aa).

S-adenosyl-L-methionine-binding positions include Asp-131 and 160-161 (DL).

The protein belongs to the UPF0677 family.

In terms of biological role, exhibits S-adenosyl-L-methionine-dependent methyltransferase activity. This is Putative S-adenosyl-L-methionine-dependent methyltransferase MAB_4584c from Mycobacteroides abscessus (strain ATCC 19977 / DSM 44196 / CCUG 20993 / CIP 104536 / JCM 13569 / NCTC 13031 / TMC 1543 / L948) (Mycobacterium abscessus).